Reading from the N-terminus, the 229-residue chain is LexA repressor (229 aa).

The segment at residues 28–48 (IREIGEALDIRSTNGVNDHLK) is a DNA-binding region (H-T-H motif). Catalysis depends on for autocatalytic cleavage activity residues Ser147 and Lys184.

This sequence belongs to the peptidase S24 family. Homodimer.

The enzyme catalyses Hydrolysis of Ala-|-Gly bond in repressor LexA.. Functionally, represses a number of genes involved in the response to DNA damage (SOS response), including recA and lexA. In the presence of single-stranded DNA, RecA interacts with LexA causing an autocatalytic cleavage which disrupts the DNA-binding part of LexA, leading to derepression of the SOS regulon and eventually DNA repair. The sequence is that of LexA repressor from Anaeromyxobacter dehalogenans (strain 2CP-C).